Reading from the N-terminus, the 157-residue chain is 2-C-methyl-D-erythritol 2,4-cyclodiphosphate synthase (157 aa).

Residues Asp-8 and His-10 each contribute to the a divalent metal cation site. 4-CDP-2-C-methyl-D-erythritol 2-phosphate contacts are provided by residues 8 to 10 (DVH) and 34 to 35 (HS). His-42 serves as a coordination point for a divalent metal cation. 4-CDP-2-C-methyl-D-erythritol 2-phosphate-binding positions include 56–58 (DIG), 61–65 (FPDTD), 100–106 (AQAPKMA), 132–135 (TTTE), Phe-139, and Arg-142.

It belongs to the IspF family. In terms of assembly, homotrimer. A divalent metal cation serves as cofactor.

It catalyses the reaction 4-CDP-2-C-methyl-D-erythritol 2-phosphate = 2-C-methyl-D-erythritol 2,4-cyclic diphosphate + CMP. It functions in the pathway isoprenoid biosynthesis; isopentenyl diphosphate biosynthesis via DXP pathway; isopentenyl diphosphate from 1-deoxy-D-xylulose 5-phosphate: step 4/6. Functionally, involved in the biosynthesis of isopentenyl diphosphate (IPP) and dimethylallyl diphosphate (DMAPP), two major building blocks of isoprenoid compounds. Catalyzes the conversion of 4-diphosphocytidyl-2-C-methyl-D-erythritol 2-phosphate (CDP-ME2P) to 2-C-methyl-D-erythritol 2,4-cyclodiphosphate (ME-CPP) with a corresponding release of cytidine 5-monophosphate (CMP). This chain is 2-C-methyl-D-erythritol 2,4-cyclodiphosphate synthase, found in Azotobacter vinelandii (strain DJ / ATCC BAA-1303).